The primary structure comprises 127 residues: Ribosome-binding factor A (127 aa).

The protein belongs to the RbfA family. Monomer. Binds 30S ribosomal subunits, but not 50S ribosomal subunits or 70S ribosomes.

It localises to the cytoplasm. Functionally, one of several proteins that assist in the late maturation steps of the functional core of the 30S ribosomal subunit. Associates with free 30S ribosomal subunits (but not with 30S subunits that are part of 70S ribosomes or polysomes). Required for efficient processing of 16S rRNA. May interact with the 5'-terminal helix region of 16S rRNA. This is Ribosome-binding factor A from Stenotrophomonas maltophilia (strain R551-3).